Here is a 958-residue protein sequence, read N- to C-terminus: MMSVLKIENFDPYSCNGIEDRNGMGYSTALLNPIVLGQDLLMSYLSIIEQPKQRGFRFRYVCEGPSHRGLPGASSEKGKKTFPTVKIFNYVGMARIEVDLVTHTDPPRVHAHSLVGKHSNKTGNCIVTVGPEDMTAQFNNLGIVHVTKKSQTEILKEKMKRNILRNTGRNTLTEVEERKIEQEVKDLKKVTDLSIVRLKFTAYLPDSNGAYTLALPPVISDPIHDSKSPGASNLRISRMDKTAGSVKGGDEVYLLCDKVQKDDIEVQFYEDDENGWHAFGDFAPTDVHKQYAIVFRTPPYHTQKIDRPVTVFLQLKRKKGGDVSDSKQFTYYPLEQDKEEVERKRRKDLPTFNNHFYGGGSPMGGAPPGSSFGQGGGSNINYQYTGMNSAFYMSSPAGGGYHSSGHMMKHCSATNSSEKNQQPSISIKKEGEEASACSQTDSATTAQKEAQCQMIMRQANLRMLSLTQRTSRALLDYATTADPRMLLAVQRHLTATQDENGDTPLHLAVIHGQSSVIEQLVQIILSIPNQQILNMSNHLQQTPLHLGVITKQYSVVAFLLKAGADPTILDRYGNSVLHLAVQSEDDKMLGVLLKYPSVGQKNLINMPDYHGLSPVHWSVKMKNEKCLVLLVKAGANVNSAERKSGKSPLHIAVEMDNLNLAVFLVKKLHADINAKTYGGNTPLHLAASRGSPMLTRMLVNEGANVLSENDEPVNKLPSCNSDTSESDSDVQMDTDSDHHGDSDTDSSTAVDSECEHSAEEMHRREQRNIRPHCAMKRRYSGHTAVDLTKSQKVRDILSKHTPGSASWKQKGPEPVNVLALETNTVQRLEKLLNEGQTGADWTELASRLRLQSLVETYKNTSSPTESLLRNYELAGGNLKELINTLQSMGLNEGVELLCKSETYAKHHSPAESKNDSAYESQSMEVDQSSGNLMDDSQKQTIPVSAAELCPTTEPTIGQ.

The RHD domain occupies 40–230 (LLMSYLSIIE…DPIHDSKSPG (191 aa)). The Nuclear localization signal signature appears at 343–347 (RKRRK). Disordered regions lie at residues 350–374 (PTFN…SFGQ) and 411–442 (CSAT…QTDS). A GRR region spans residues 352-390 (FNNHFYGGGSPMGGAPPGSSFGQGGGSNINYQYTGMNSA). Gly residues predominate over residues 357–374 (YGGGSPMGGAPPGSSFGQ). The span at 412–425 (SATNSSEKNQQPSI) shows a compositional bias: polar residues. ANK repeat units lie at residues 500 to 529 (NGDT…SIPN), 539 to 568 (LQQT…DPTI), 572 to 603 (YGNS…QKNL), 610 to 639 (HGLS…NVNS), 644 to 674 (SGKS…DINA), and 678 to 707 (GGNT…NVLS). The tract at residues 705–766 (VLSENDEPVN…SAEEMHRREQ (62 aa)) is disordered. Acidic residues predominate over residues 724-734 (SESDSDVQMDT). Positions 753–766 (ECEHSAEEMHRREQ) are enriched in basic and acidic residues. Residues 815–901 (VNVLALETNT…EGVELLCKSE (87 aa)) form the Death domain. Over residues 904–916 (AKHHSPAESKNDS) the composition is skewed to basic and acidic residues. The interval 904-958 (AKHHSPAESKNDSAYESQSMEVDQSSGNLMDDSQKQTIPVSAAELCPTTEPTIGQ) is disordered. A compositionally biased stretch (polar residues) spans 917–931 (AYESQSMEVDQSSGN).

In terms of assembly, active NF-kappa-B is a heterodimer of an about 52 kDa DNA-binding subunit and the weak DNA-binding subunit p65. Two heterodimers might form a labile tetramer. Post-translationally, while translation occurs, the particular unfolded structure after the GRR repeat promotes the generation of p52 making it an acceptable substrate for the proteasome. This process is known as cotranslational processing. The processed form is active and the unprocessed form acts as an inhibitor (I kappa B-like), being able to form cytosolic complexes with NF-kappa B, trapping it in the cytoplasm. Complete folding of the region downstream of the GRR repeat precludes processing. In terms of processing, constitutive processing is tightly suppressed by its C-terminal processing inhibitory domain, named PID, which contains the death domain. As to expression, expressed in spleen.

The protein localises to the nucleus. The protein resides in the cytoplasm. In terms of biological role, appears to have dual functions such as cytoplasmic retention of attached NF-kappa-B proteins and generation of p52 by a cotranslational processing. The proteasome-mediated process ensures the production of both p52 and p100 and preserves their independent function. p52 binds to the kappa-B consensus sequence 5'-GGRNNYYCC-3', located in the enhancer region of genes involved in immune response and acute phase reactions. In concert with RELB, may play a role in the regulation of the circadian clock. In Xenopus laevis (African clawed frog), this protein is Nuclear factor NF-kappa-B p100 subunit (nfkb2).